Reading from the N-terminus, the 157-residue chain is SsrA-binding protein (157 aa).

This sequence belongs to the SmpB family.

The protein resides in the cytoplasm. In terms of biological role, required for rescue of stalled ribosomes mediated by trans-translation. Binds to transfer-messenger RNA (tmRNA), required for stable association of tmRNA with ribosomes. tmRNA and SmpB together mimic tRNA shape, replacing the anticodon stem-loop with SmpB. tmRNA is encoded by the ssrA gene; the 2 termini fold to resemble tRNA(Ala) and it encodes a 'tag peptide', a short internal open reading frame. During trans-translation Ala-aminoacylated tmRNA acts like a tRNA, entering the A-site of stalled ribosomes, displacing the stalled mRNA. The ribosome then switches to translate the ORF on the tmRNA; the nascent peptide is terminated with the 'tag peptide' encoded by the tmRNA and targeted for degradation. The ribosome is freed to recommence translation, which seems to be the essential function of trans-translation. The chain is SsrA-binding protein from Levilactobacillus brevis (strain ATCC 367 / BCRC 12310 / CIP 105137 / JCM 1170 / LMG 11437 / NCIMB 947 / NCTC 947) (Lactobacillus brevis).